Reading from the N-terminus, the 322-residue chain is HPr kinase/phosphorylase (322 aa).

Active-site residues include histidine 146 and lysine 167. Glycine 161–serine 168 lines the ATP pocket. Residue serine 168 coordinates Mg(2+). Aspartate 185 acts as the Proton acceptor; for phosphorylation activity. Proton donor; for dephosphorylation activity in catalysis. Positions leucine 209–aspartate 218 are important for the catalytic mechanism of both phosphorylation and dephosphorylation. Glutamate 210 provides a ligand contact to Mg(2+). Arginine 250 is a catalytic residue. Residues glutamine 271–arginine 276 are important for the catalytic mechanism of dephosphorylation.

Belongs to the HPrK/P family. In terms of assembly, homohexamer. Requires Mg(2+) as cofactor.

It carries out the reaction [HPr protein]-L-serine + ATP = [HPr protein]-O-phospho-L-serine + ADP + H(+). The catalysed reaction is [HPr protein]-O-phospho-L-serine + phosphate + H(+) = [HPr protein]-L-serine + diphosphate. Catalyzes the ATP- as well as the pyrophosphate-dependent phosphorylation of a specific serine residue in HPr, a phosphocarrier protein of the phosphoenolpyruvate-dependent sugar phosphotransferase system (PTS). HprK/P also catalyzes the pyrophosphate-producing, inorganic phosphate-dependent dephosphorylation (phosphorolysis) of seryl-phosphorylated HPr (P-Ser-HPr). The polypeptide is HPr kinase/phosphorylase (Burkholderia multivorans (strain ATCC 17616 / 249)).